The chain runs to 219 residues: Occludin/ELL domain-containing protein 1 (219 aa).

The interval 1-110 (MQIHAGPASR…DYELKYPPVT (110 aa)) is disordered. Positions 17–43 (LARLSGPEATCNSRPAARGRQRAAAPR) are enriched in low complexity. Positions 72–93 (VFADELRPREPLHPEKHPRDLG) are enriched in basic and acidic residues. The 111-residue stretch at 100–210 (PDYELKYPPV…QIRKFDDQQD (111 aa)) folds into the OCEL domain.

This sequence belongs to the ELL/occludin family.

This chain is Occludin/ELL domain-containing protein 1 (Ocel1), found in Mus musculus (Mouse).